A 456-amino-acid chain; its full sequence is Hydroxyproline dehydrogenase (456 aa).

N6-acetyllysine is present on residues Lys310 and Lys320.

The protein belongs to the proline oxidase family. FAD serves as cofactor.

The enzyme catalyses trans-4-hydroxy-L-proline + a quinone = (3R,5S)-1-pyrroline-3-hydroxy-5-carboxylate + a quinol + H(+). The catalysed reaction is L-proline + a quinone = (S)-1-pyrroline-5-carboxylate + a quinol + H(+). Its function is as follows. Dehydrogenase that converts trans-4-L-hydroxyproline to delta-1-pyrroline-3-hydroxy-5-carboxylate (Hyp) using ubiquinone-10 as the terminal electron acceptor. Can also use proline as a substrate but with a very much lower efficiency. Does not react with other diastereomers of Hyp: trans-4-D-hydroxyproline and cis-4-L-hydroxyproline. Ubiquininone analogs such as menadione, duroquinone and ubiquinone-1 react more efficiently than oxygen as the terminal electron acceptor during catalysis. The protein is Hydroxyproline dehydrogenase of Rattus norvegicus (Rat).